The chain runs to 310 residues: HPr kinase/phosphorylase (310 aa).

Active-site residues include His138 and Lys159. 153-160 (GSSGVGKS) provides a ligand contact to ATP. Ser160 provides a ligand contact to Mg(2+). Asp177 acts as the Proton acceptor; for phosphorylation activity. Proton donor; for dephosphorylation activity in catalysis. The segment at 201-210 (LEIRGLGIIN) is important for the catalytic mechanism of both phosphorylation and dephosphorylation. A Mg(2+)-binding site is contributed by Glu202. Arg243 is a catalytic residue. The interval 264-269 (PVRPGR) is important for the catalytic mechanism of dephosphorylation.

Belongs to the HPrK/P family. Homohexamer. Mg(2+) is required as a cofactor.

The enzyme catalyses [HPr protein]-L-serine + ATP = [HPr protein]-O-phospho-L-serine + ADP + H(+). It carries out the reaction [HPr protein]-O-phospho-L-serine + phosphate + H(+) = [HPr protein]-L-serine + diphosphate. Functionally, catalyzes the ATP- as well as the pyrophosphate-dependent phosphorylation of a specific serine residue in HPr, a phosphocarrier protein of the phosphoenolpyruvate-dependent sugar phosphotransferase system (PTS). HprK/P also catalyzes the pyrophosphate-producing, inorganic phosphate-dependent dephosphorylation (phosphorolysis) of seryl-phosphorylated HPr (P-Ser-HPr). The two antagonistic activities of HprK/P are regulated by several intracellular metabolites, which change their concentration in response to the absence or presence of rapidly metabolisable carbon sources (glucose, fructose, etc.) in the growth medium. Also phosphorylates/dephosphorylates the HPr-like catabolite repression protein crh on a specific serine residue. Therefore, by controlling the phosphorylation state of HPr and crh, HPrK/P is a sensor enzyme that plays a major role in the regulation of carbon metabolism and sugar transport: it mediates carbon catabolite repression (CCR), and regulates PTS-catalyzed carbohydrate uptake and inducer exclusion. The chain is HPr kinase/phosphorylase (hprK) from Halalkalibacterium halodurans (strain ATCC BAA-125 / DSM 18197 / FERM 7344 / JCM 9153 / C-125) (Bacillus halodurans).